A 188-amino-acid chain; its full sequence is HTH-type transcriptional repressor AcnR (188 aa).

Positions 10–70 (VNSRQEILEG…ALAREDAARM (61 aa)) constitute an HTH tetR-type domain. Positions 33-52 (TVRRLEEATGKSRGAIFHHF) form a DNA-binding region, H-T-H motif. Residues 79-80 (LV), R130, and N134 contribute to the citrate site. E181 serves as a coordination point for Mg(2+). Residue R185 participates in citrate binding.

As to quaternary structure, homodimer.

AcnR negatively controls the expression of the aconitase gene acn. In Corynebacterium efficiens (strain DSM 44549 / YS-314 / AJ 12310 / JCM 11189 / NBRC 100395), this protein is HTH-type transcriptional repressor AcnR.